Consider the following 690-residue polypeptide: Exonuclease GOR (690 aa).

Disordered stretches follow at residues 136–162 (TRVA…NRSG) and 567–690 (QPRH…SLHH). Positions 585 to 595 (APSTTAISPES) are enriched in polar residues. Residues 605–614 (KETGAVDGRR) are compositionally biased toward basic and acidic residues. Positions 612–626 (GRRGQKAKSNPNRPL) are GOR14-1 epitope. Low complexity predominate over residues 631–646 (NPCRGPSGLSPSLCPS). The segment covering 661 to 682 (PPLPVPRVPAAPPRACPHPSAH) has biased composition (pro residues).

The protein belongs to the REXO1/REXO3 family.

It localises to the cytoplasm. The protein resides in the nucleus. This chain is Exonuclease GOR (REXO1L1), found in Pan troglodytes (Chimpanzee).